Reading from the N-terminus, the 951-residue chain is Translation initiation factor IF-2 (951 aa).

Disordered regions lie at residues 58 to 255 and 305 to 329; these read AERK…AVVI and DVSRDKRRGRQPGRPISEEQAKSLS. Over residues 101-170 the composition is skewed to low complexity; the sequence is AEPQYAEPQQ…PQAQPAQPAA (70 aa). Residues 171-216 show a composition bias toward pro residues; it reads PVAPPAPSAQPSAPQPPAAQPRPPQPPMPSRPPPAGYRPAPPPGAR. Low complexity predominate over residues 217 to 234; sequence PPMSAAPGAPAQPGAAGQ. The 170-residue stretch at 450 to 619 folds into the tr-type G domain; that stretch reads IRPPVVTVMG…ALQSEVLELK (170 aa). The G1 stretch occupies residues 459-466; it reads GHVDHGKT. Residue 459 to 466 participates in GTP binding; the sequence is GHVDHGKT. A G2 region spans residues 484–488; the sequence is GITQH. The tract at residues 505–508 is G3; it reads DTPG. GTP contacts are provided by residues 505–509 and 559–562; these read DTPGH and NKVD. Residues 559–562 are G4; sequence NKVD. A G5 region spans residues 595-597; sequence SAR.

It belongs to the TRAFAC class translation factor GTPase superfamily. Classic translation factor GTPase family. IF-2 subfamily.

The protein resides in the cytoplasm. One of the essential components for the initiation of protein synthesis. Protects formylmethionyl-tRNA from spontaneous hydrolysis and promotes its binding to the 30S ribosomal subunits. Also involved in the hydrolysis of GTP during the formation of the 70S ribosomal complex. This Anaeromyxobacter dehalogenans (strain 2CP-1 / ATCC BAA-258) protein is Translation initiation factor IF-2.